The primary structure comprises 355 residues: N-acetyl-gamma-glutamyl-phosphate reductase (355 aa).

Cys152 is a catalytic residue.

Belongs to the NAGSA dehydrogenase family. Type 1 subfamily.

The protein localises to the cytoplasm. The enzyme catalyses N-acetyl-L-glutamate 5-semialdehyde + phosphate + NADP(+) = N-acetyl-L-glutamyl 5-phosphate + NADPH + H(+). It functions in the pathway amino-acid biosynthesis; L-arginine biosynthesis; N(2)-acetyl-L-ornithine from L-glutamate: step 3/4. Catalyzes the NADPH-dependent reduction of N-acetyl-5-glutamyl phosphate to yield N-acetyl-L-glutamate 5-semialdehyde. In Psychrobacter sp. (strain PRwf-1), this protein is N-acetyl-gamma-glutamyl-phosphate reductase.